The chain runs to 428 residues: Adenylosuccinate synthetase (428 aa).

GTP contacts are provided by residues 12–18 (GDEGKGK) and 40–42 (GHT). Asp13 acts as the Proton acceptor in catalysis. Positions 13 and 40 each coordinate Mg(2+). IMP contacts are provided by residues 13-16 (DEGK), 38-41 (NAGH), Thr128, Arg142, Gln222, Thr237, and Arg301. The Proton donor role is filled by His41. Position 297–303 (297–303 (TVTGRSR)) interacts with substrate. GTP contacts are provided by residues Arg303, 329-331 (KLD), and 411-413 (STS).

It belongs to the adenylosuccinate synthetase family. As to quaternary structure, homodimer. The cofactor is Mg(2+).

It is found in the cytoplasm. It catalyses the reaction IMP + L-aspartate + GTP = N(6)-(1,2-dicarboxyethyl)-AMP + GDP + phosphate + 2 H(+). Its pathway is purine metabolism; AMP biosynthesis via de novo pathway; AMP from IMP: step 1/2. Functionally, plays an important role in the de novo pathway of purine nucleotide biosynthesis. Catalyzes the first committed step in the biosynthesis of AMP from IMP. The sequence is that of Adenylosuccinate synthetase from Phenylobacterium zucineum (strain HLK1).